The following is an 83-amino-acid chain: Protein ORF5 (83 aa).

This sequence belongs to the microviridae C protein family.

Its function is as follows. Plays a central role in the packaging of viral DNA into phage procapsid, which occurs in the late stage of infection. Can interact with the replicative complex after the completion of one round of DNA synthesis. When protein ORF5 is bound to the replicative form, the complex becomes accessible to procapsid and serves as a DNA packaging apparatus. In Spiroplasma melliferum (SpV4), this protein is Protein ORF5.